Here is a 348-residue protein sequence, read N- to C-terminus: D-alanine--D-alanine ligase (348 aa).

The ATP-grasp domain maps to 132-334 (KRILEVAGVP…YSDLIKELVV (203 aa)). An ATP-binding site is contributed by 162–217 (LEKLTFPVFVKPANMGSSVGISKAENESELRSAIDLALKYDSRILIEQGVVAREIE). Mg(2+)-binding residues include D288, E301, and N303.

This sequence belongs to the D-alanine--D-alanine ligase family. It depends on Mg(2+) as a cofactor. Mn(2+) is required as a cofactor.

It is found in the cytoplasm. It carries out the reaction 2 D-alanine + ATP = D-alanyl-D-alanine + ADP + phosphate + H(+). Its pathway is cell wall biogenesis; peptidoglycan biosynthesis. Functionally, cell wall formation. The chain is D-alanine--D-alanine ligase from Streptococcus thermophilus (strain ATCC BAA-491 / LMD-9).